The sequence spans 478 residues: Lipoprotein lipase (478 aa).

The signal sequence occupies residues 1-28 (MESKALLLLALSVCLQSLTVSRGGLVAA). An interaction with GPIHBP1 region spans residues 35–56 (KDFRDIESKFALRTPEDTAEDT). A disulfide bridge links C57 with C70. Residue N73 is glycosylated (N-linked (GlcNAc...) asparagine). A 3'-nitrotyrosine modification is found at Y124. The active-site Nucleophile is S162. D186 functions as the Charge relay system in the catalytic mechanism. Position 194 is a 3'-nitrotyrosine (Y194). Positions 197, 200, 202, and 205 each coordinate Ca(2+). C246 and C269 are disulfide-bonded. The segment at 246 to 269 (CNIGEALRVIAERGLGDVDQLVKC) is essential for determining substrate specificity. The active-site Charge relay system is H271. N287 carries an N-linked (GlcNAc...) asparagine glycan. Intrachain disulfides connect C294-C313 and C305-C308. Residues 344–467 (FHYQVKIHFS…KGKSPVIFVK (124 aa)) enclose the PLAT domain. Position 346 is a 3'-nitrotyrosine (Y346). N-linked (GlcNAc...) asparagine glycosylation is present at N389. The important for interaction with lipoprotein particles stretch occupies residues 420 to 424 (WSNWW). Residues 433-437 (KIRVK) are important for heparin binding. Residues 446–470 (IFCSREKMSYLQKGKSPVIFVKCHD) form an interaction with GPIHBP1 region. C448 and C468 are joined by a disulfide.

This sequence belongs to the AB hydrolase superfamily. Lipase family. As to quaternary structure, homodimer. Interacts with GPIHBP1 with 1:1 stoichiometry. Interacts with APOC2; the interaction activates LPL activity in the presence of lipids. Interaction with heparan sulfate proteoglycans is required to protect LPL against loss of activity. Associates with lipoprotein particles in blood plasma. Interacts with LMF1 and SEL1L; interaction with SEL1L is required to prevent aggregation of newly synthesized LPL in the endoplasmic reticulum (ER), and for normal export of LPL from the ER to the extracellular space. Interacts with SORL1; SORL1 acts as a sorting receptor, promoting LPL localization to endosomes and later to lysosomes, leading to degradation of newly synthesized LPL. Tyrosine nitration after lipopolysaccharide (LPS) challenge down-regulates the lipase activity. As to expression, detected in milk (at protein level).

It localises to the cell membrane. The protein resides in the secreted. The protein localises to the extracellular space. Its subcellular location is the extracellular matrix. The enzyme catalyses a triacylglycerol + H2O = a diacylglycerol + a fatty acid + H(+). The catalysed reaction is a 1,2-diacyl-sn-glycero-3-phosphocholine + H2O = a 2-acyl-sn-glycero-3-phosphocholine + a fatty acid + H(+). It catalyses the reaction 1,2,3-tri-(9Z-octadecenoyl)-glycerol + H2O = di-(9Z)-octadecenoylglycerol + (9Z)-octadecenoate + H(+). It carries out the reaction 1,2-di-(9Z-octadecenoyl)-sn-glycero-3-phosphocholine + H2O = (9Z-octadecenoyl)-sn-glycero-3-phosphocholine + (9Z)-octadecenoate + H(+). The enzyme catalyses 1,2,3-tributanoylglycerol + H2O = dibutanoylglycerol + butanoate + H(+). The catalysed reaction is 1,2-dihexadecanoyl-sn-glycero-3-phosphocholine + H2O = hexadecanoyl-sn-glycero-3-phosphocholine + hexadecanoate + H(+). With respect to regulation, the apolipoprotein APOC2 acts as a coactivator of LPL activity. Ca(2+) binding promotes protein stability and formation of the active homodimer. Interaction with GPIHBP1 protects LPL against inactivation by ANGPTL4. Its function is as follows. Key enzyme in triglyceride metabolism. Catalyzes the hydrolysis of triglycerides from circulating chylomicrons and very low density lipoproteins (VLDL), and thereby plays an important role in lipid clearance from the blood stream, lipid utilization and storage. Although it has both phospholipase and triglyceride lipase activities it is primarily a triglyceride lipase with low but detectable phospholipase activity. Mediates margination of triglyceride-rich lipoprotein particles in capillaries. Recruited to its site of action on the luminal surface of vascular endothelium by binding to GPIHBP1 and cell surface heparan sulfate proteoglycans. This chain is Lipoprotein lipase (LPL), found in Bos taurus (Bovine).